A 511-amino-acid polypeptide reads, in one-letter code: 2-isopropylmalate synthase (511 aa).

In terms of domain architecture, Pyruvate carboxyltransferase spans 5 to 267 (LIIFDTTLRD…DTNIDTMHIL (263 aa)). Residues Asp14, His202, His204, and Asn238 each coordinate Mn(2+). Residues 393–511 (KLVSLKVCTE…TVTNKAHPQI (119 aa)) are regulatory domain.

It belongs to the alpha-IPM synthase/homocitrate synthase family. LeuA type 1 subfamily. As to quaternary structure, homodimer. Mn(2+) is required as a cofactor.

Its subcellular location is the cytoplasm. The enzyme catalyses 3-methyl-2-oxobutanoate + acetyl-CoA + H2O = (2S)-2-isopropylmalate + CoA + H(+). The protein operates within amino-acid biosynthesis; L-leucine biosynthesis; L-leucine from 3-methyl-2-oxobutanoate: step 1/4. Its function is as follows. Catalyzes the condensation of the acetyl group of acetyl-CoA with 3-methyl-2-oxobutanoate (2-ketoisovalerate) to form 3-carboxy-3-hydroxy-4-methylpentanoate (2-isopropylmalate). In Vesicomyosocius okutanii subsp. Calyptogena okutanii (strain HA), this protein is 2-isopropylmalate synthase.